The sequence spans 204 residues: Protein C (204 aa).

Residues 1–78 (MPSFLRGILK…TEQSQRRPKI (78 aa)) are disordered. Basic and acidic residues predominate over residues 10–20 (KPKERHHENKN). A compositionally biased stretch (low complexity) spans 25-34 (SSDSLTSSYP).

Belongs to the respirovirus protein C family.

This is Protein C (P/V/C) from Homo sapiens (Human).